The following is a 583-amino-acid chain: Putative rhophilin-2-like protein RHPN2P1 (583 aa).

Residues 26 to 375 (PLIPLGLKET…RLTYAQHQED (350 aa)) form the BRO1 domain. In terms of domain architecture, PDZ spans 412–490 (RSNRFTAEEG…DEIEMKVVSL (79 aa)).

The protein is Putative rhophilin-2-like protein RHPN2P1 (RHPN2P1) of Homo sapiens (Human).